The following is a 138-amino-acid chain: ATP synthase epsilon chain 2 (138 aa).

This sequence belongs to the ATPase epsilon chain family. In terms of assembly, F-type ATPases have 2 components, CF(1) - the catalytic core - and CF(0) - the membrane proton channel. CF(1) has five subunits: alpha(3), beta(3), gamma(1), delta(1), epsilon(1). CF(0) has three main subunits: a, b and c.

It is found in the cell inner membrane. In terms of biological role, produces ATP from ADP in the presence of a proton gradient across the membrane. This Syntrophotalea carbinolica (strain DSM 2380 / NBRC 103641 / GraBd1) (Pelobacter carbinolicus) protein is ATP synthase epsilon chain 2.